We begin with the raw amino-acid sequence, 125 residues long: Prefoldin subunit beta (125 aa).

This sequence belongs to the prefoldin subunit beta family. Heterohexamer of two alpha and four beta subunits.

It is found in the cytoplasm. Functionally, molecular chaperone capable of stabilizing a range of proteins. Seems to fulfill an ATP-independent, HSP70-like function in archaeal de novo protein folding. This chain is Prefoldin subunit beta (pfdB), found in Sulfurisphaera tokodaii (strain DSM 16993 / JCM 10545 / NBRC 100140 / 7) (Sulfolobus tokodaii).